The following is a 238-amino-acid chain: MAGHSKWANTKHRKERADHKKGKIFSRIIKELISAVKLGGADPKSNARLRMVIQKAKENNIPNENIERNLKKATSAEQKNFEEVTYELYGHGGVGIIVEAMTDNKNRTASDMRIAINKRGGSLVEPGSVLYNFARKGACTVAKSSIDEEVIFSYAIEAGAEDLDTEDEENFLVICAPSELASVKEKLISQGATCSEDRLIYLPLRLVDCDEKDGEANLALIDWLEQIEDVDDVYHNMS.

The disordered stretch occupies residues Met-1–Lys-20. The segment covering Asn-9–Lys-20 has biased composition (basic residues).

Belongs to the TACO1 family.

The protein resides in the cytoplasm. The chain is Probable transcriptional regulatory protein CPn_0573/CP_0176/CPj0573/CpB0595 from Chlamydia pneumoniae (Chlamydophila pneumoniae).